We begin with the raw amino-acid sequence, 389 residues long: Heat-inducible transcription repressor HrcA (389 aa).

The protein belongs to the HrcA family.

Functionally, negative regulator of class I heat shock genes (grpE-dnaK-dnaJ and groELS operons). Prevents heat-shock induction of these operons. This chain is Heat-inducible transcription repressor HrcA, found in Synechococcus sp. (strain JA-2-3B'a(2-13)) (Cyanobacteria bacterium Yellowstone B-Prime).